Reading from the N-terminus, the 680-residue chain is Putative E3 ubiquitin-protein ligase UNKL (680 aa).

The tract at residues 1 to 22 is disordered; sequence MPSVSKAAAAALSGSPPQTEKP. 4 C3H1-type zinc fingers span residues 75-104, 115-145, 243-277, and 283-310; these read YSPD…HRTT, YYKT…HGPL, QYRS…HSRT, and PEST…HVEK. Composition is skewed to low complexity over residues 326–337, 375–396, 465–497, and 545–562; these read TSPSSTGSGQPG, VSSS…SPTA, SLPR…VGSS, and SPSP…SASP. 4 disordered regions span residues 326 to 358, 375 to 400, 442 to 520, and 545 to 566; these read TSPS…QDSK, VSSS…LPAP, DGHD…SAAS, and SPSP…NGAE. Positions 563–619 form a coiled coil; that stretch reads NGAELARVRRQLDEAKRKIRQWEESWQQVKQVCDAWQREAQEAKERARVADSDRQLA. The RING-type zinc-finger motif lies at 639 to 674; the sequence is CVACRERAHGAVLRPCQHHILCEPCAATAPECPYCK.

This sequence belongs to the unkempt family. In terms of assembly, isoform 4 (C-terminal) interacts with the GTP-bound form of RAC1. Isoform 4 (C-terminal) interacts with SMARCD2/BAF60b. Isoform 4 is ubiquitinated in the C-terminal. Ubiquitination is enhanced by activated RAC1. The presence of the RING finger domain is not essential for ubiquitination to occur.

It is found in the cytoplasm. The protein resides in the nucleus. Its pathway is protein modification; protein ubiquitination. May participate in a protein complex showing an E3 ligase activity regulated by RAC1. Ubiquitination is directed towards itself and possibly other substrates, such as SMARCD2/BAF60b. Intrinsic E3 ligase activity has not been proven. The sequence is that of Putative E3 ubiquitin-protein ligase UNKL (UNKL) from Homo sapiens (Human).